The sequence spans 138 residues: Endoribonuclease YbeY (138 aa).

3 residues coordinate Zn(2+): His98, His102, and His108.

It belongs to the endoribonuclease YbeY family. It depends on Zn(2+) as a cofactor.

It localises to the cytoplasm. Functionally, single strand-specific metallo-endoribonuclease involved in late-stage 70S ribosome quality control and in maturation of the 3' terminus of the 16S rRNA. The polypeptide is Endoribonuclease YbeY (Thermosipho melanesiensis (strain DSM 12029 / CIP 104789 / BI429)).